Consider the following 284-residue polypeptide: Thymidylate synthase (284 aa).

Arg34 is a dUMP binding site. Residue His64 coordinates (6R)-5,10-methylene-5,6,7,8-tetrahydrofolate. 139–140 (RR) is a binding site for dUMP. The active-site Nucleophile is the Cys159. Residues 186-189 (RSAD), Asn197, and 227-229 (HIY) each bind dUMP. Asp189 is a (6R)-5,10-methylene-5,6,7,8-tetrahydrofolate binding site. (6R)-5,10-methylene-5,6,7,8-tetrahydrofolate is bound at residue Ala283.

Belongs to the thymidylate synthase family. Bacterial-type ThyA subfamily. Homodimer.

The protein localises to the cytoplasm. The catalysed reaction is dUMP + (6R)-5,10-methylene-5,6,7,8-tetrahydrofolate = 7,8-dihydrofolate + dTMP. The protein operates within pyrimidine metabolism; dTTP biosynthesis. In terms of biological role, catalyzes the reductive methylation of 2'-deoxyuridine-5'-monophosphate (dUMP) to 2'-deoxythymidine-5'-monophosphate (dTMP) while utilizing 5,10-methylenetetrahydrofolate (mTHF) as the methyl donor and reductant in the reaction, yielding dihydrofolate (DHF) as a by-product. This enzymatic reaction provides an intracellular de novo source of dTMP, an essential precursor for DNA biosynthesis. The sequence is that of Thymidylate synthase from Polaromonas sp. (strain JS666 / ATCC BAA-500).